Consider the following 758-residue polypeptide: Spastin (758 aa).

Positions 1 to 99 (MVRTKNQSSS…PTTCSPRSGH (99 aa)) are disordered. Topologically, residues 1–121 (MVRTKNQSSS…KQNLYVVSFP (121 aa)) are cytoplasmic. Positions 1-210 (MVRTKNQSSS…RPIQPLEMAA (210 aa)) are required for localization to punctate cytoplasmic foci. Composition is skewed to low complexity over residues 8 to 28 (SSSS…SSGA), 43 to 58 (RSSS…AGGS), 66 to 76 (SSNRRSPGSSP), and 85 to 95 (TDDLTPTTCSP). The helical intramembrane region spans 122-142 (IIFLFNVLRSLIYQLFCIFRY). Residues 143–758 (LYGASTKVIY…WSQDYGDITI (616 aa)) are Cytoplasmic-facing. 2 stretches are compositionally biased toward polar residues: residues 169 to 180 (SKEQQQSLNHPS) and 189 to 198 (QEQQLSNQPQ). Residues 169–203 (SKEQQQSLNHPSELSREGDGQEQQLSNQPQRFRPI) are disordered. The segment at 208 to 758 (MAANRPGGGY…WSQDYGDITI (551 aa)) is sufficient for interaction with microtubules and microtubule severing. The region spanning 233 to 308 (HRRAFEYISK…SMARDRLHFL (76 aa)) is the MIT domain. 2 disordered regions span residues 353–375 (RVRS…SGRK) and 390–454 (NKSQ…ASTP). Polar residues-rich tracts occupy residues 390–406 (NKSQ…TSVG) and 425–454 (QFSS…ASTP). The required for interaction with microtubules stretch occupies residues 443-455 (NNGPSGSGASTPV). 523–530 (GPPGNGKT) is a binding site for ATP.

This sequence belongs to the AAA ATPase family. Spastin subfamily. As to quaternary structure, homohexamer. The homohexamer is stabilized by ATP-binding. The homohexamer may adopt a ring conformation through which microtubules pass prior to being severed. Interacts with microtubules. Interacts with atl; may be involved in microtubule dynamics.

The protein resides in the membrane. It localises to the cytoplasm. Its subcellular location is the cytoskeleton. The protein localises to the microtubule organizing center. It is found in the centrosome. The protein resides in the chromosome. It localises to the lipid droplet. It catalyses the reaction n ATP + n H2O + a microtubule = n ADP + n phosphate + (n+1) alpha/beta tubulin heterodimers.. Its function is as follows. ATP-dependent microtubule severing protein. Stimulates microtubule minus-end depolymerization and poleward microtubule flux in the mitotic spindle. Regulates microtubule stability in the neuromuscular junction synapse. Involved in lipid metabolism by regulating the size and distribution of lipid droplets. Involved in axon regeneration by regulating microtubule severing. This is Spastin from Drosophila erecta (Fruit fly).